The sequence spans 250 residues: Ino eighty subunit 3 (250 aa).

The interval 29–70 (PDFLEKDPHHKKFHNADGLNQQGSSTPSTATDANAASTASTH) is disordered. Over residues 52–70 (SSTPSTATDANAASTASTH) the composition is skewed to low complexity. Serine 157 and serine 211 each carry phosphoserine.

As to quaternary structure, component of the chromatin-remodeling INO80 complex, at least composed of ARP4, ARP5, ARP8, RVB1, RVB2, TAF14, NHP10, IES1, IES3, IES4, IES6, ACT1, IES2, IES5 and INO80.

It is found in the nucleus. In terms of biological role, probably involved in transcription regulation via its interaction with the INO80 complex, a chromatin-remodeling complex. In Saccharomyces cerevisiae (strain ATCC 204508 / S288c) (Baker's yeast), this protein is Ino eighty subunit 3 (IES3).